Reading from the N-terminus, the 218-residue chain is Leucine-rich repeat protein 1 (218 aa).

An N-terminal signal peptide occupies residues 1–27 (MASRNYRWELFAASLTLTLALIHLVEA). 4 LRR repeats span residues 94-117 (EHLQYLELYKNNIQGTIPSELGNL), 119-140 (NLISLDLYNNNLTGIVPTSLGK), 141-165 (LKSLVFLRLNDNRLTGPIPRALTAI), and 167-190 (SLKVVDVSSNDLCGTIPTNGPFAH).

In terms of assembly, interacts with HIR1.

Its function is as follows. Involved in plant defense response. This is Leucine-rich repeat protein 1 from Arabidopsis thaliana (Mouse-ear cress).